Consider the following 118-residue polypeptide: Large ribosomal subunit protein bL20 (118 aa).

Belongs to the bacterial ribosomal protein bL20 family.

Its function is as follows. Binds directly to 23S ribosomal RNA and is necessary for the in vitro assembly process of the 50S ribosomal subunit. It is not involved in the protein synthesizing functions of that subunit. In Francisella tularensis subsp. tularensis (strain WY96-3418), this protein is Large ribosomal subunit protein bL20.